Here is a 329-residue protein sequence, read N- to C-terminus: GTP 3',8-cyclase (329 aa).

In terms of domain architecture, Radical SAM core spans 1–229; sequence MNQVDYLRIS…EGYVRGNGPA (229 aa). Residue R8 participates in GTP binding. [4Fe-4S] cluster-binding residues include C15 and C19. Y21 lines the S-adenosyl-L-methionine pocket. C22 lines the [4Fe-4S] cluster pocket. R60 contributes to the GTP binding site. G64 contributes to the S-adenosyl-L-methionine binding site. T91 contacts GTP. S115 lines the S-adenosyl-L-methionine pocket. K155 is a GTP binding site. M189 serves as a coordination point for S-adenosyl-L-methionine. [4Fe-4S] cluster-binding residues include C252 and C255. 257-259 provides a ligand contact to GTP; it reads RVR. C269 contacts [4Fe-4S] cluster.

It belongs to the radical SAM superfamily. MoaA family. In terms of assembly, monomer and homodimer. [4Fe-4S] cluster is required as a cofactor.

The enzyme catalyses GTP + AH2 + S-adenosyl-L-methionine = (8S)-3',8-cyclo-7,8-dihydroguanosine 5'-triphosphate + 5'-deoxyadenosine + L-methionine + A + H(+). The protein operates within cofactor biosynthesis; molybdopterin biosynthesis. Catalyzes the cyclization of GTP to (8S)-3',8-cyclo-7,8-dihydroguanosine 5'-triphosphate. This chain is GTP 3',8-cyclase, found in Cyanothece sp. (strain PCC 7425 / ATCC 29141).